The sequence spans 295 residues: Cbb3-type cytochrome c oxidase subunit CcoP (295 aa).

Over 1 to 31 (MAQKEKDALSGVETTGHEWDGLRELNNPLPK) the chain is Cytoplasmic. The helical transmembrane segment at 32-52 (WWLYIFYVCIAWSLVYYVLYP) threads the bilayer. The Periplasmic segment spans residues 53-295 (AWPLGKSYTK…VYVHNLGGGK (243 aa)). Cytochrome c domains lie at 108–200 (FAMA…LSLN) and 207–292 (AAAE…HNLG). Positions 121, 124, 125, 175, 220, 223, 224, and 269 each coordinate heme c.

The protein belongs to the CcoP / FixP family. As to quaternary structure, component of the cbb3-type cytochrome c oxidase at least composed of CcoN, CcoO, CcoQ and CcoP. Heme c serves as cofactor.

Its subcellular location is the cell inner membrane. Its pathway is energy metabolism; oxidative phosphorylation. Its function is as follows. C-type cytochrome. Part of the cbb3-type cytochrome c oxidase complex. CcoP subunit is required for transferring electrons from donor cytochrome c via its heme groups to CcoO subunit. From there, electrons are shuttled to the catalytic binuclear center of CcoN subunit where oxygen reduction takes place. The complex also functions as a proton pump. The chain is Cbb3-type cytochrome c oxidase subunit CcoP from Azospirillum brasilense.